A 32-amino-acid polypeptide reads, in one-letter code: Cytochrome b6-f complex subunit 7 (32 aa).

The chain crosses the membrane as a helical span at residues 5–25 (IFGTAAIFWVLIPAGLLGGAL).

The protein belongs to the PetM family. As to quaternary structure, the 4 large subunits of the cytochrome b6-f complex are cytochrome b6, subunit IV (17 kDa polypeptide, PetD), cytochrome f and the Rieske protein, while the 4 small subunits are PetG, PetL, PetM and PetN. The complex functions as a dimer.

The protein resides in the cellular thylakoid membrane. Its function is as follows. Component of the cytochrome b6-f complex, which mediates electron transfer between photosystem II (PSII) and photosystem I (PSI), cyclic electron flow around PSI, and state transitions. The chain is Cytochrome b6-f complex subunit 7 from Prochlorococcus marinus (strain SARG / CCMP1375 / SS120).